Here is an 825-residue protein sequence, read N- to C-terminus: Lon protease (825 aa).

Positions 41-237 constitute a Lon N-terminal domain; sequence LPIIFIPNTI…KVIQLLLEQK (197 aa). 388 to 395 is a binding site for ATP; the sequence is GPPGTGKT. One can recognise a Lon proteolytic domain in the interval 625–805; that stretch reads SNPPGVVTGL…DEVLYEALGL (181 aa). Catalysis depends on residues Ser-711 and Lys-754.

It belongs to the peptidase S16 family. Homohexamer. Organized in a ring with a central cavity.

The protein resides in the cytoplasm. The catalysed reaction is Hydrolysis of proteins in presence of ATP.. Functionally, ATP-dependent serine protease that mediates the selective degradation of mutant and abnormal proteins as well as certain short-lived regulatory proteins. Required for cellular homeostasis and for survival from DNA damage and developmental changes induced by stress. Degrades polypeptides processively to yield small peptide fragments that are 5 to 10 amino acids long. Binds to DNA in a double-stranded, site-specific manner. This is Lon protease from Methanosphaera stadtmanae (strain ATCC 43021 / DSM 3091 / JCM 11832 / MCB-3).